Consider the following 193-residue polypeptide: Chaperone protein TorD (193 aa).

It belongs to the TorD/DmsD family. TorD subfamily.

The protein localises to the cytoplasm. Its function is as follows. Involved in the biogenesis of TorA. Acts on TorA before the insertion of the molybdenum cofactor and, as a result, probably favors a conformation of the apoenzyme that is competent for acquiring the cofactor. This Actinobacillus succinogenes (strain ATCC 55618 / DSM 22257 / CCUG 43843 / 130Z) protein is Chaperone protein TorD.